A 333-amino-acid chain; its full sequence is Phosphate acyltransferase (333 aa).

It belongs to the PlsX family. Homodimer. Probably interacts with PlsY.

Its subcellular location is the cytoplasm. The catalysed reaction is a fatty acyl-[ACP] + phosphate = an acyl phosphate + holo-[ACP]. Its pathway is lipid metabolism; phospholipid metabolism. Functionally, catalyzes the reversible formation of acyl-phosphate (acyl-PO(4)) from acyl-[acyl-carrier-protein] (acyl-ACP). This enzyme utilizes acyl-ACP as fatty acyl donor, but not acyl-CoA. The polypeptide is Phosphate acyltransferase (Enterococcus faecalis (strain ATCC 700802 / V583)).